The chain runs to 211 residues: Bifunctional transcriptional activator/DNA repair enzyme AdaA (211 aa).

The active-site Nucleophile; methyl group acceptor from methylphosphotriester is Cys-54. Zn(2+) contacts are provided by Cys-54, Cys-58, Cys-85, and Cys-88. The region spanning 102–200 (DLITEYIDKN…GQTPARFRQM (99 aa)) is the HTH araC/xylS-type domain. Positions 119–140 (ESLADICHGSPYHMHRTFKKIK) form a DNA-binding region, H-T-H motif.

The cofactor is Zn(2+).

It catalyses the reaction (2'-deoxyribonucleoside 5'-methylphosphotriester)-DNA + L-cysteinyl-[protein] = 2'-deoxyribonucleotide-DNA + S-methyl-L-cysteinyl-[protein] + H(+). In terms of biological role, is involved in the adaptive response to alkylation damage in DNA caused by alkylating agents. Repairs the methylphosphotriester lesions in DNA by a direct and irreversible transfer of the methyl group to one of its own cysteine residues. Its function is as follows. The methylation of AdaA by methylphosphotriesters in DNA leads to its activation as a transcriptional regulator that activates the transcription of the ada operon which consists of adaA and adaB, and of the adjacent gene alkA. This Bacillus subtilis (strain 168) protein is Bifunctional transcriptional activator/DNA repair enzyme AdaA (adaA).